Reading from the N-terminus, the 380-residue chain is Cytochrome b (380 aa).

4 consecutive transmembrane segments (helical) span residues 34–54 (FGSL…LLAM), 78–99 (WLIR…FLHI), 114–134 (WNTG…GYVL), and 179–199 (FFAL…VHLT). The heme b site is built by histidine 84 and histidine 98. Positions 183 and 197 each coordinate heme b. Histidine 202 is an a ubiquinone binding site. 4 consecutive transmembrane segments (helical) span residues 227 to 247 (LKDI…ALFS), 289 to 309 (LGGV…PFLH), 321 to 341 (LSQT…WIGS), and 348 to 368 (FMII…ILFP).

Belongs to the cytochrome b family. In terms of assembly, the cytochrome bc1 complex contains 11 subunits: 3 respiratory subunits (MT-CYB, CYC1 and UQCRFS1), 2 core proteins (UQCRC1 and UQCRC2) and 6 low-molecular weight proteins (UQCRH/QCR6, UQCRB/QCR7, UQCRQ/QCR8, UQCR10/QCR9, UQCR11/QCR10 and a cleavage product of UQCRFS1). This cytochrome bc1 complex then forms a dimer. Requires heme b as cofactor.

It is found in the mitochondrion inner membrane. Its function is as follows. Component of the ubiquinol-cytochrome c reductase complex (complex III or cytochrome b-c1 complex) that is part of the mitochondrial respiratory chain. The b-c1 complex mediates electron transfer from ubiquinol to cytochrome c. Contributes to the generation of a proton gradient across the mitochondrial membrane that is then used for ATP synthesis. In Gallus lafayettii (Sri Lanka junglefowl), this protein is Cytochrome b (MT-CYB).